Here is a 145-residue protein sequence, read N- to C-terminus: Transcriptional regulator MraZ (145 aa).

2 consecutive SpoVT-AbrB domains span residues 5–47 (EHQH…PLPE) and 76–119 (AVEC…AKDQ).

Belongs to the MraZ family. Forms oligomers.

The protein localises to the cytoplasm. The protein resides in the nucleoid. The sequence is that of Transcriptional regulator MraZ from Pelotomaculum thermopropionicum (strain DSM 13744 / JCM 10971 / SI).